A 208-amino-acid chain; its full sequence is ATP-dependent Clp protease proteolytic subunit (208 aa).

The active-site Nucleophile is the serine 98. Histidine 123 is an active-site residue.

It belongs to the peptidase S14 family. In terms of assembly, fourteen ClpP subunits assemble into 2 heptameric rings which stack back to back to give a disk-like structure with a central cavity, resembling the structure of eukaryotic proteasomes.

Its subcellular location is the cytoplasm. It catalyses the reaction Hydrolysis of proteins to small peptides in the presence of ATP and magnesium. alpha-casein is the usual test substrate. In the absence of ATP, only oligopeptides shorter than five residues are hydrolyzed (such as succinyl-Leu-Tyr-|-NHMec, and Leu-Tyr-Leu-|-Tyr-Trp, in which cleavage of the -Tyr-|-Leu- and -Tyr-|-Trp bonds also occurs).. Functionally, cleaves peptides in various proteins in a process that requires ATP hydrolysis. Has a chymotrypsin-like activity. Plays a major role in the degradation of misfolded proteins. The protein is ATP-dependent Clp protease proteolytic subunit of Wolbachia sp. subsp. Brugia malayi (strain TRS).